The sequence spans 740 residues: Gramillins biosynthetic cluster protein FGSG_11657 (740 aa).

4 disordered regions span residues 353–391 (QADSPVPLSSVKEESGLGKLARSPAEPAPSRPLPGSSIP), 414–434 (SKLSDEAEADTSIKPDSDAAS), 514–535 (PKEQEEPKRHRTSNNSIVGSSD), and 656–686 (EHEGEGRADTNRHVSTQSNMPTEQSLLPQGD). The span at 656 to 667 (EHEGEGRADTNR) shows a compositional bias: basic and acidic residues. Over residues 668–682 (HVSTQSNMPTEQSLL) the composition is skewed to polar residues.

It functions in the pathway mycotoxin biosynthesis. In terms of biological role, part of the gene cluster that mediates the biosynthesis of gramillins A and B, bicyclic lipopeptides that induce cell death in maize leaves but not in wheat leaves. The nonribosomal peptide synthetase GRA1 incorporates respectively a glutamic adic (Glu), a leucine (Leu), a serine (Ser), a hydroxyglutamine (HOGln), a 2-amino decanoic acid, and 2 cysteins (CysB and CysA). The biosynthesis of 2-amino decanoic acid incorporated in gramillins could be initiated by a fatty acid synthase composed of the alpha and beta subunits FGSG_00036 and FGSG_11656. The cytochrome P450 monooxygenase FGSG_15680 could hydroxylate the fatty acid chain. Subsequent oxidation to the ketone by the oxidoreductase FGSG_00048 and transamination by aminotransferase FGSG_00049 could form 2-amino-decanoic acid. On the other hand, FGSG_15680 could also be responsible for the HO-modified glutamine at the gamma-position. Whether hydroxylation occurs on the fully assembled product or on the Gln residue prior to assembly into the gramillins requires further proof. The thioredoxin FGSG_00043 could also be required for the disulfide-bond formation between CysA and CysB. The specific involvement of the remaining proteins from the cluster is more difficult to discern, but could have broader regulatory (FGSG_00040 and FGSG_11657) or enzymatic functions (FGSG_00044 and FGSG_00045). The final C-domain of GRA1 does not possess the expected sequence of a termination CT domain, often implicated in macrocyclization and release of a cyclopeptidein fungal NRPs; and the thioesterase FGSG_00047 may act in concert with the terminal C-domain of GRA1 to catalyze the formation of the macrocyclic anhydride and release of the products. This is Gramillins biosynthetic cluster protein FGSG_11657 from Gibberella zeae (strain ATCC MYA-4620 / CBS 123657 / FGSC 9075 / NRRL 31084 / PH-1) (Wheat head blight fungus).